The chain runs to 443 residues: D-alanyl-D-alanine carboxypeptidase DacA (443 aa).

The signal sequence occupies residues 1–31 (MNIKKCKQLLMSLVVLTLAVTCLAPMSKAKA). Ser-67 functions as the Acyl-ester intermediate in the catalytic mechanism. Lys-70 acts as the Proton acceptor in catalysis. Ser-131 is an active-site residue. Lys-258 provides a ligand contact to substrate.

It belongs to the peptidase S11 family.

It localises to the secreted. The protein resides in the cell wall. Its subcellular location is the cell membrane. The protein localises to the membrane raft. The enzyme catalyses Preferential cleavage: (Ac)2-L-Lys-D-Ala-|-D-Ala. Also transpeptidation of peptidyl-alanyl moieties that are N-acyl substituents of D-alanine.. Its pathway is cell wall biogenesis; peptidoglycan biosynthesis. In terms of biological role, removes C-terminal D-alanyl residues from sugar-peptide cell wall precursors. The polypeptide is D-alanyl-D-alanine carboxypeptidase DacA (dacA) (Bacillus subtilis (strain 168)).